A 313-amino-acid polypeptide reads, in one-letter code: Dimethyladenosine transferase (313 aa).

Histidine 37, leucine 39, glycine 64, glutamate 85, aspartate 113, and asparagine 128 together coordinate S-adenosyl-L-methionine.

Belongs to the class I-like SAM-binding methyltransferase superfamily. rRNA adenine N(6)-methyltransferase family. In terms of assembly, part of the small subunit (SSU) processome, composed of more than 70 proteins and the RNA chaperone small nucleolar RNA (snoRNA) U3.

Its subcellular location is the nucleus. It is found in the nucleoplasm. The protein resides in the nucleolus. It carries out the reaction adenosine(1779)/adenosine(1780) in 18S rRNA + 4 S-adenosyl-L-methionine = N(6)-dimethyladenosine(1779)/N(6)-dimethyladenosine(1780) in 18S rRNA + 4 S-adenosyl-L-homocysteine + 4 H(+). Specifically dimethylates two adjacent adenosines in the loop of a conserved hairpin near the 3'-end of 18S rRNA in the 40S particle. Involved in the pre-rRNA processing steps leading to small-subunit rRNA production independently of its RNA-modifying catalytic activity. Part of the small subunit (SSU) processome, first precursor of the small eukaryotic ribosomal subunit. During the assembly of the SSU processome in the nucleolus, many ribosome biogenesis factors, an RNA chaperone and ribosomal proteins associate with the nascent pre-rRNA and work in concert to generate RNA folding, modifications, rearrangements and cleavage as well as targeted degradation of pre-ribosomal RNA by the RNA exosome. This chain is Dimethyladenosine transferase (Dimt1), found in Mus musculus (Mouse).